We begin with the raw amino-acid sequence, 205 residues long: MTGNELEIELKEPLLPVEEYLAAGVHIGTQQKSKDMMKFIYRVRGDGLYILDIQATDERIKTAAKFLSQYEPSKILVVTSRQYGQYPAKKFADAIGGMAVVGRFIPGMLTNQRLHGLNKYIEPDVVVVTDPIGDSQTIAEAVQVGIPIVALCDTNNMTKYVDVVIPTNNKGRKALSVIYYLLTKELLRLRGVATSLTPEDFETEL.

The protein belongs to the universal ribosomal protein uS2 family.

The sequence is that of Small ribosomal subunit protein uS2 from Methanoculleus marisnigri (strain ATCC 35101 / DSM 1498 / JR1).